A 367-amino-acid chain; its full sequence is NADH-quinone oxidoreductase subunit H (367 aa).

A run of 8 helical transmembrane segments spans residues 18–38 (VLLFLKIIIVIISVMVSVAYL), 87–107 (LCFLIAPVITFTLALLGWAVI), 132–152 (IGVLYILAISSLGVYGIIIAG), 180–200 (LTIVTVLLATGSLKLGEIVIA), 204–224 (MPYWIDLLLLPMAFMFFISAL), 257–277 (FFLGEYANMILMSAMAVIFFF), 291–311 (IIPGTIWFIFKIVILLFCFIW), and 328–348 (GWKVFLPISLFWVILVSGILV).

This sequence belongs to the complex I subunit 1 family. As to quaternary structure, NDH-1 is composed of 14 different subunits. Subunits NuoA, H, J, K, L, M, N constitute the membrane sector of the complex.

The protein resides in the cell inner membrane. The enzyme catalyses a quinone + NADH + 5 H(+)(in) = a quinol + NAD(+) + 4 H(+)(out). NDH-1 shuttles electrons from NADH, via FMN and iron-sulfur (Fe-S) centers, to quinones in the respiratory chain. The immediate electron acceptor for the enzyme in this species is believed to be ubiquinone. Couples the redox reaction to proton translocation (for every two electrons transferred, four hydrogen ions are translocated across the cytoplasmic membrane), and thus conserves the redox energy in a proton gradient. This subunit may bind ubiquinone. The sequence is that of NADH-quinone oxidoreductase subunit H from Ehrlichia ruminantium (strain Gardel).